Reading from the N-terminus, the 466-residue chain is 3-isopropylmalate dehydratase large subunit (466 aa).

[4Fe-4S] cluster contacts are provided by Cys-347, Cys-407, and Cys-410.

This sequence belongs to the aconitase/IPM isomerase family. LeuC type 1 subfamily. In terms of assembly, heterodimer of LeuC and LeuD. [4Fe-4S] cluster is required as a cofactor.

It carries out the reaction (2R,3S)-3-isopropylmalate = (2S)-2-isopropylmalate. It participates in amino-acid biosynthesis; L-leucine biosynthesis; L-leucine from 3-methyl-2-oxobutanoate: step 2/4. Its function is as follows. Catalyzes the isomerization between 2-isopropylmalate and 3-isopropylmalate, via the formation of 2-isopropylmaleate. This is 3-isopropylmalate dehydratase large subunit from Vibrio vulnificus (strain CMCP6).